The chain runs to 349 residues: B3 domain-containing protein At5g24050 (349 aa).

Residues 240-341 constitute a DNA-binding region (TF-B3); sequence FNNLLRNDFL…ILCFAMEQSS (102 aa).

It localises to the nucleus. In Arabidopsis thaliana (Mouse-ear cress), this protein is B3 domain-containing protein At5g24050.